Consider the following 457-residue polypeptide: Bifunctional protein GlmU (457 aa).

A pyrophosphorylase region spans residues 1–229; the sequence is MYNCAIILAA…YEEIMGVNSR (229 aa). Residues 8 to 11, K22, Q73, and 78 to 79 each bind UDP-N-acetyl-alpha-D-glucosamine; these read LAAG and GT. D103 is a Mg(2+) binding site. G140, E155, N170, and N227 together coordinate UDP-N-acetyl-alpha-D-glucosamine. A Mg(2+)-binding site is contributed by N227. Positions 230–250 are linker; it reads VQLSEAEIVMRKRINHKHMVN. Residues 251–457 are N-acetyltransferase; that stretch reads GVTFIDCEST…WLDKKGLLKK (207 aa). The UDP-N-acetyl-alpha-D-glucosamine site is built by R332 and K350. H362 acts as the Proton acceptor in catalysis. UDP-N-acetyl-alpha-D-glucosamine-binding residues include Y365 and N376. Acetyl-CoA contacts are provided by residues 385-386, A422, and R439; that span reads NY.

This sequence in the N-terminal section; belongs to the N-acetylglucosamine-1-phosphate uridyltransferase family. It in the C-terminal section; belongs to the transferase hexapeptide repeat family. As to quaternary structure, homotrimer. Requires Mg(2+) as cofactor.

The protein resides in the cytoplasm. The catalysed reaction is alpha-D-glucosamine 1-phosphate + acetyl-CoA = N-acetyl-alpha-D-glucosamine 1-phosphate + CoA + H(+). The enzyme catalyses N-acetyl-alpha-D-glucosamine 1-phosphate + UTP + H(+) = UDP-N-acetyl-alpha-D-glucosamine + diphosphate. It functions in the pathway nucleotide-sugar biosynthesis; UDP-N-acetyl-alpha-D-glucosamine biosynthesis; N-acetyl-alpha-D-glucosamine 1-phosphate from alpha-D-glucosamine 6-phosphate (route II): step 2/2. It participates in nucleotide-sugar biosynthesis; UDP-N-acetyl-alpha-D-glucosamine biosynthesis; UDP-N-acetyl-alpha-D-glucosamine from N-acetyl-alpha-D-glucosamine 1-phosphate: step 1/1. Its pathway is bacterial outer membrane biogenesis; LPS lipid A biosynthesis. Functionally, catalyzes the last two sequential reactions in the de novo biosynthetic pathway for UDP-N-acetylglucosamine (UDP-GlcNAc). The C-terminal domain catalyzes the transfer of acetyl group from acetyl coenzyme A to glucosamine-1-phosphate (GlcN-1-P) to produce N-acetylglucosamine-1-phosphate (GlcNAc-1-P), which is converted into UDP-GlcNAc by the transfer of uridine 5-monophosphate (from uridine 5-triphosphate), a reaction catalyzed by the N-terminal domain. The chain is Bifunctional protein GlmU from Clostridium botulinum (strain Langeland / NCTC 10281 / Type F).